Reading from the N-terminus, the 169-residue chain is MARTVNLKGNPVTLVGPELKVGDRAPEAVVVTKDLQEKIVGGAKDVVQVIITVPSLDTPVCETETKKFNEIMAGMEGVDVTVVSMDLPFAQKRFCESFNIQNVTVASDFRYRDMEKYGVLIGEGALKGILARAVFIIDKEGKVAYVQLVPEITEEPNYDEVVNKVKELI.

The Thioredoxin domain maps to 19–167 (LKVGDRAPEA…YDEVVNKVKE (149 aa)). The active-site Cysteine sulfenic acid (-SOH) intermediate is the Cys61. Cys61 and Cys95 are joined by a disulfide.

It belongs to the peroxiredoxin family. Tpx subfamily. In terms of assembly, homodimer.

The enzyme catalyses a hydroperoxide + [thioredoxin]-dithiol = an alcohol + [thioredoxin]-disulfide + H2O. In terms of biological role, thiol-specific peroxidase that catalyzes the reduction of hydrogen peroxide and organic hydroperoxides to water and alcohols, respectively. Plays a role in cell protection against oxidative stress by detoxifying peroxides. The sequence is that of Thiol peroxidase from Aquifex aeolicus (strain VF5).